A 1202-amino-acid chain; its full sequence is PAN2-PAN3 deadenylation complex catalytic subunit PAN2 (1202 aa).

WD repeat units lie at residues 153–193, 195–231, 244–280, and 328–367; these read DENE…QKYA, ETPG…VEHE, VHGN…AITP, and PVGP…SFNP. Residues 368–485 form a linker region; it reads YSRETEFALP…VGREEEPHLH (118 aa). The USP domain maps to 486–924; that stretch reads MVSKKYRKVT…VPAILYYVKR (439 aa). S791 is modified (phosphoserine). The region spanning 975–1147 is the Exonuclease domain; the sequence is VGLDAEFVTL…EDARTALQLY (173 aa). Residues D978, E980, D1087, and D1139 each coordinate a divalent metal cation. A Phosphoserine modification is found at S1189.

Belongs to the peptidase C19 family. PAN2 subfamily. Forms a heterotrimer with an asymmetric homodimer of the regulatory subunit PAN3 to form the poly(A)-nuclease (PAN) deadenylation complex. Interacts with PAN3 isoform 1/Pan3L and isoform 3/Pan3S. Interacts with ZFP36. It depends on a divalent metal cation as a cofactor.

It localises to the cytoplasm. The protein resides in the P-body. Its subcellular location is the nucleus. It carries out the reaction Exonucleolytic cleavage of poly(A) to 5'-AMP.. Positively regulated by the regulatory subunit PAN3. Functionally, catalytic subunit of the poly(A)-nuclease (PAN) deadenylation complex, one of two cytoplasmic mRNA deadenylases involved in general and miRNA-mediated mRNA turnover. PAN specifically shortens poly(A) tails of RNA and the activity is stimulated by poly(A)-binding protein (PABP). PAN deadenylation is followed by rapid degradation of the shortened mRNA tails by the CCR4-NOT complex. Deadenylated mRNAs are then degraded by two alternative mechanisms, namely exosome-mediated 3'-5' exonucleolytic degradation, or deadenylation-dependent mRNA decaping and subsequent 5'-3' exonucleolytic degradation by XRN1. Also acts as an important regulator of the HIF1A-mediated hypoxic response. Required for HIF1A mRNA stability independent of poly(A) tail length regulation. This is PAN2-PAN3 deadenylation complex catalytic subunit PAN2 from Homo sapiens (Human).